The following is a 243-amino-acid chain: MTYCLRIADIPTNERPRERLMTHGPKVLATAELIAILLGTGQGPGKLSAVGLGQYLLQELGKNQRDPLAVLREVTPAELMQIPGIGPAKATSILAAVELGKRTFQFRPLDKTPIDSPVAAVAALSQDLMWQNQERFAVLLLDVKNRLLGTQVITIGTATETLASPREIFREIIRQGATRTIVAHNHPSGNVEPSPEDIELTRQLLAGAQLLGIPLLDHLILGNGNHQSLREITTLWNDYPQGD.

An MPN domain is found at 113-235 (PIDSPVAAVA…HQSLREITTL (123 aa)). Histidine 184, histidine 186, and aspartate 197 together coordinate Zn(2+). The JAMM motif signature appears at 184–197 (HNHPSGNVEPSPED).

This sequence belongs to the UPF0758 family.

This is UPF0758 protein alr2351 from Nostoc sp. (strain PCC 7120 / SAG 25.82 / UTEX 2576).